The chain runs to 101 residues: Small ribosomal subunit protein uS14 (101 aa).

The protein belongs to the universal ribosomal protein uS14 family. As to quaternary structure, part of the 30S ribosomal subunit. Contacts proteins S3 and S10.

In terms of biological role, binds 16S rRNA, required for the assembly of 30S particles and may also be responsible for determining the conformation of the 16S rRNA at the A site. This chain is Small ribosomal subunit protein uS14, found in Francisella tularensis subsp. holarctica (strain FTNF002-00 / FTA).